The primary structure comprises 283 residues: Gap junction beta-1 protein (283 aa).

Topologically, residues Met1–Arg22 are cytoplasmic. The chain crosses the membrane as a helical span at residues Val23–Gly45. The Extracellular segment spans residues Asp46 to Arg75. The chain crosses the membrane as a helical span at residues Leu76–Val95. Topologically, residues Ala96–Thr130 are cytoplasmic. Residues Leu131 to Phe153 traverse the membrane as a helical segment. The Extracellular segment spans residues Tyr154–Thr191. Residues Val192 to Ile214 form a helical membrane-spanning segment. Residues Arg215–Cys283 are Cytoplasmic-facing. Phosphoserine occurs at positions 233, 258, 266, and 277.

Belongs to the connexin family. Beta-type (group I) subfamily. As to quaternary structure, a connexon is composed of a hexamer of connexins. Interacts with CNST.

It localises to the cell membrane. Its subcellular location is the cell junction. The protein resides in the gap junction. Its function is as follows. One gap junction consists of a cluster of closely packed pairs of transmembrane channels, the connexons, through which materials of low MW diffuse from one cell to a neighboring cell. The sequence is that of Gap junction beta-1 protein (GJB1) from Macaca fascicularis (Crab-eating macaque).